The sequence spans 254 residues: 5'-nucleotidase SurE (254 aa).

The a divalent metal cation site is built by Asp-8, Asp-9, Ser-40, and Asn-93.

This sequence belongs to the SurE nucleotidase family. The cofactor is a divalent metal cation.

It localises to the cytoplasm. It catalyses the reaction a ribonucleoside 5'-phosphate + H2O = a ribonucleoside + phosphate. Functionally, nucleotidase that shows phosphatase activity on nucleoside 5'-monophosphates. In Methylorubrum populi (strain ATCC BAA-705 / NCIMB 13946 / BJ001) (Methylobacterium populi), this protein is 5'-nucleotidase SurE.